A 278-amino-acid chain; its full sequence is MALTVKEKKNVEVVVPQPRQKHVIQGEPTVAYETRDLNLWYGKDHALKNINLSIYEKEVTAIIGPSGCGKSTYLKTLNRMVELVPSVRISGNISYRGRNILDKSFQVEELRTRVGMVFQKPNPFPKSIFDNVAYGPRIHGIRNKKILSEIVERSLRGAAIWDEVKDRLHENAYGLSGGQQQRLCIARCLAIEPDVILMDEPTSALDPKSTLKIEELIQELKKEYSIIIVTHNMQQAARISDKTAFFLNGEVVEYDSTDIIFSNPSDKRTEDYITGRFG.

The region spanning 32–273 (YETRDLNLWY…PSDKRTEDYI (242 aa)) is the ABC transporter domain. 64–71 (GPSGCGKS) contacts ATP.

It belongs to the ABC transporter superfamily. Phosphate importer (TC 3.A.1.7) family. As to quaternary structure, the complex is composed of two ATP-binding proteins (PstB), two transmembrane proteins (PstC and PstA) and a solute-binding protein (PstS).

The protein resides in the cell membrane. It catalyses the reaction phosphate(out) + ATP + H2O = ADP + 2 phosphate(in) + H(+). Functionally, part of the ABC transporter complex PstSACB involved in phosphate import. Responsible for energy coupling to the transport system. This Halalkalibacterium halodurans (strain ATCC BAA-125 / DSM 18197 / FERM 7344 / JCM 9153 / C-125) (Bacillus halodurans) protein is Phosphate import ATP-binding protein PstB.